The chain runs to 1362 residues: DNA-directed RNA polymerase subunit beta' (1362 aa).

A compositionally biased stretch (basic residues) spans 1-14 (MTSSSKSRKSKSSK). The segment at 1 to 39 (MTSSSKSRKSKSSKASKAAKEAPVSASRPLSKTPPPFRN) is disordered. A compositionally biased stretch (low complexity) spans 15–27 (ASKAAKEAPVSAS). Positions 248, 315, 322, and 325 each coordinate Zn(2+). The segment at 1316 to 1336 (TRHNIDPSASNFAAFTRPDAD) is disordered.

This sequence belongs to the RNA polymerase beta' chain family. RpoC2 subfamily. As to quaternary structure, in cyanobacteria the RNAP catalytic core is composed of 2 alpha, 1 beta, 1 beta', 1 gamma and 1 omega subunit. When a sigma factor is associated with the core the holoenzyme is formed, which can initiate transcription. The cofactor is Zn(2+).

It carries out the reaction RNA(n) + a ribonucleoside 5'-triphosphate = RNA(n+1) + diphosphate. In terms of biological role, DNA-dependent RNA polymerase catalyzes the transcription of DNA into RNA using the four ribonucleoside triphosphates as substrates. The sequence is that of DNA-directed RNA polymerase subunit beta' from Synechococcus sp. (strain CC9605).